Here is a 415-residue protein sequence, read N- to C-terminus: MGSLGAILKHPEDFYPLLKLKIAARHAEKQIPSEPHWAFCYSMLHKVSRSFGLVIQQLGPQLRDAVCIFYLVLRALDTVEDDTSISTEVKVPILMAFHRHIYDNDWHFSCGTKEYKVLMDEFHHVSNAFLDLGSGYKEAIEDITMRMGAGMAKFICKEVETIDDYDEYCHYVAGLVGLGLSKLFHASGAEDLATDSLSNSMGLFLQKTNIIRDYLEDINEIPKSRMFWPRQIWSKYVDKLEDLKYEENSAKAVQCLNDMVTDALVHAEDCLKYMSDLRGPAIFRFCAIPQIMAIGTLALCFNNTQVFRGVVKMRRGLTAKVIDQTKTMSDVYGAFFDFSCLLKSKVDNNDPNATKTLSRLEAIQKICKNSGALTTKRKSYIIENESGYNSTLIVILFIILAILYAYLSSNLPNSL.

2 consecutive transmembrane segments (helical) span residues 281 to 301 (AIFRFCAIPQIMAIGTLALCF) and 392 to 412 (LIVILFIILAILYAYLSSNLP).

This sequence belongs to the phytoene/squalene synthase family. The cofactor is Mg(2+). Requires Mn(2+) as cofactor.

It localises to the endoplasmic reticulum membrane. The enzyme catalyses 2 (2E,6E)-farnesyl diphosphate + NADH + H(+) = squalene + 2 diphosphate + NAD(+). It carries out the reaction 2 (2E,6E)-farnesyl diphosphate + NADPH + H(+) = squalene + 2 diphosphate + NADP(+). The protein operates within terpene metabolism; lanosterol biosynthesis; lanosterol from farnesyl diphosphate: step 1/3. Its function is as follows. Component of the triterpene saponins (e.g. ginsenosides or panaxosides) and phytosterols biosynthetic pathways. Catalyzes the biosynthesis of squalene. This chain is Squalene synthase 10, found in Panax ginseng (Korean ginseng).